Reading from the N-terminus, the 823-residue chain is Translation initiation factor IF-2 (823 aa).

Disordered stretches follow at residues 30 to 66 (VPPS…DDKR) and 156 to 192 (TPSH…IKKV). Polar residues predominate over residues 36 to 48 (RGTSTGKSFTTVE). Basic and acidic residues predominate over residues 56 to 66 (PGEYISHDDKR). The tr-type G domain maps to 322–491 (PRPPVVTVMG…LLLAEMLELS (170 aa)). The segment at 331–338 (GHVDHGKT) is G1. Residue 331-338 (GHVDHGKT) coordinates GTP. Residues 356 to 360 (GITQH) are G2. Positions 377–380 (DTPG) are G3. GTP-binding positions include 377–381 (DTPGH) and 431–434 (NKID). The tract at residues 431 to 434 (NKID) is G4. The G5 stretch occupies residues 467–469 (SAK).

It belongs to the TRAFAC class translation factor GTPase superfamily. Classic translation factor GTPase family. IF-2 subfamily.

The protein localises to the cytoplasm. In terms of biological role, one of the essential components for the initiation of protein synthesis. Protects formylmethionyl-tRNA from spontaneous hydrolysis and promotes its binding to the 30S ribosomal subunits. Also involved in the hydrolysis of GTP during the formation of the 70S ribosomal complex. This chain is Translation initiation factor IF-2, found in Anaplasma phagocytophilum (strain HZ).